A 132-amino-acid chain; its full sequence is Precursor of CEP10 (132 aa).

An N-terminal signal peptide occupies residues 1 to 19 (MKLFIIIVVTSLTISKVFD). A propeptide spanning residues 20-66 (KTLVTIEARNLRKMDRHEHFNANEDFVEAKMLKKIDNKNNLNNRCIN) is cleaved from the precursor. Pro-70 and Pro-73 each carry hydroxyproline. A propeptide spanning residues 82–91 (PKVINNKFTK) is cleaved from the precursor. Hydroxyproline is present on residues Pro-95, Pro-98, and Pro-102. The propeptide occupies 107–116 (LRVVNNKFTN). Hydroxyproline is present on residues Pro-120, Pro-123, and Pro-127. Pro-132 is a propeptide.

Belongs to the C-terminally encoded plant signaling peptide (CEP) family. Interacts with CEP receptors (e.g. CEPR1 and CEPR2). In terms of processing, the mature small signaling peptide is generated by proteolytic processing of the longer precursor.

Its subcellular location is the secreted. It is found in the extracellular space. The protein localises to the apoplast. Its function is as follows. Extracellular signaling peptide that may regulate primary root growth rate and systemic nitrogen (N)-demand signaling. The polypeptide is Precursor of CEP10 (Arabidopsis thaliana (Mouse-ear cress)).